Consider the following 589-residue polypeptide: MYRWLVRILGTIFRFCDRSVPPARALLKRRRSDSTLFSTVDTDEIPAKRPRLDCFIHQVKNSLYNAASLFGFPFQLTTKPMVTSACNGTRNVAPSGEVFSNPSSCELTGSGSWNNMLKLGNKSPNGISDYPKIRVTVTRDQPRRVLPSFGFTLNSEGYNRRPGGRRHSKGNPESSLMWKPQEQAVTEMISEESGKGLRRPHRTVEEGVQKEEREKYRKLLERLKESGHGNSVCPVTSNYHSSQRSQMDTLKTKGWGEEQNHGVKTTQFVPKQYRLVETRGPLCSLRSEKRCSKGKITDTEKMVGIRFENESRRGYQLEPDLSEEVSARLRLGSGSNGLLRRKVSIIETKEKNCSGKERDRRTDDLLELTEDMEKEISNALGHGPQDEILSSAFKLRITRGDIQTLKNYHWLNDEVINFYMNLLVERNKKQGYPALHVFSTFFYPKLKSGGYQAVKRWTKGVNLFEQEIILVPIHRKVHWSLVVIDLRKKCLKYLDSMGQKGHRICEILLQYLQDESKTKRNIDLNLLEWTHYSMKPHEIPQQLNGSDCGMFTCKYADYISRDKPITFTQHQMPLFRKKMVWEILHQQLL.

The Nuclear localization signal signature appears at 28 to 31 (KRRR). Ser-32 is modified (phosphoserine). The short motif at 46 to 51 (PAKRPR) is the Nuclear localization signal element. Positions 71 to 382 (GFPFQLTTKP…EKEISNALGH (312 aa)) are axin-binding. 2 disordered regions span residues 148 to 179 (SFGF…LMWK) and 191 to 210 (EESG…GVQK). A Nuclear export signal motif is present at residues 317-332 (LEPDLSEEVSARLRLG). A phosphoserine mark is found at Ser-333 and Ser-344. The protease stretch occupies residues 395-559 (LRITRGDIQT…MFTCKYADYI (165 aa)). Catalysis depends on residues His-478 and Asp-495. The active-site Nucleophile is Cys-548.

The protein belongs to the peptidase C48 family. As to quaternary structure, binds to SUMO2 and SUMO3. Interacts with the C-terminal domain of NUP153 via its N-terminus. Interacts with MTA1. Post-translationally, polyubiquitinated; which leads to proteasomal degradation.

The protein resides in the nucleus. It is found in the nuclear pore complex. It localises to the nucleus membrane. The protein localises to the cytoplasm. Its function is as follows. Protease that catalyzes two essential functions in the SUMO pathway. The first is the hydrolysis of an alpha-linked peptide bond at the C-terminal end of the small ubiquitin-like modifier (SUMO) propeptides, SUMO1, SUMO2 and SUMO3 leading to the mature form of the proteins. The second is the deconjugation of SUMO1, SUMO2 and SUMO3 from targeted proteins, by cleaving an epsilon-linked peptide bond between the C-terminal glycine of the mature SUMO and the lysine epsilon-amino group of the target protein. May down-regulate CTNNB1 levels and thereby modulate the Wnt pathway. Deconjugates SUMO2 from MTA1. Plays a dynamic role in adipogenesis by desumoylating and promoting the stabilization of CEBPB. Acts as a regulator of the cGAS-STING pathway by catalyzing desumoylation of CGAS and STING1 during the late phase of viral infection. The chain is Sentrin-specific protease 2 (SENP2) from Pongo abelii (Sumatran orangutan).